A 61-amino-acid polypeptide reads, in one-letter code: Large ribosomal subunit protein bL32 (61 aa).

The protein belongs to the bacterial ribosomal protein bL32 family.

In Ehrlichia canis (strain Jake), this protein is Large ribosomal subunit protein bL32.